A 236-amino-acid polypeptide reads, in one-letter code: 7-cyano-7-deazaguanine synthase (236 aa).

Cysteine 7 to alanine 17 lines the ATP pocket. Residues cysteine 185, cysteine 193, cysteine 196, and cysteine 199 each contribute to the Zn(2+) site.

The protein belongs to the QueC family. It depends on Zn(2+) as a cofactor.

It carries out the reaction 7-carboxy-7-deazaguanine + NH4(+) + ATP = 7-cyano-7-deazaguanine + ADP + phosphate + H2O + H(+). It participates in purine metabolism; 7-cyano-7-deazaguanine biosynthesis. Its function is as follows. Catalyzes the ATP-dependent conversion of 7-carboxy-7-deazaguanine (CDG) to 7-cyano-7-deazaguanine (preQ(0)). This Rhizobium etli (strain ATCC 51251 / DSM 11541 / JCM 21823 / NBRC 15573 / CFN 42) protein is 7-cyano-7-deazaguanine synthase.